An 877-amino-acid polypeptide reads, in one-letter code: Alpha-glucosidase (877 aa).

The signal sequence occupies residues 1–23 (MATVGVLLLCLCLCLFAPRLCSS). Residues 89–115 (VPQDIIPRPAPGDVLHDAPPASSAPLQ) are disordered. Residues asparagine 191, asparagine 298, asparagine 338, and asparagine 391 are each glycosylated (N-linked (GlcNAc...) asparagine). Catalysis depends on residues aspartate 437 and glutamate 440. N-linked (GlcNAc...) asparagine glycosylation occurs at asparagine 471. Aspartate 534 functions as the Proton donor in the catalytic mechanism. Asparagine 570 carries N-linked (GlcNAc...) asparagine glycosylation.

This sequence belongs to the glycosyl hydrolase 31 family. In terms of tissue distribution, high levels seen in the aleurone and scutellum after germination, while low levels are found in developing seeds.

It carries out the reaction Hydrolysis of terminal, non-reducing (1-&gt;4)-linked alpha-D-glucose residues with release of alpha-D-glucose.. The sequence is that of Alpha-glucosidase from Hordeum vulgare (Barley).